A 206-amino-acid chain; its full sequence is Octanoyltransferase (206 aa).

One can recognise a BPL/LPL catalytic domain in the interval 30–206 (PETNDEIWLV…EFVTLLNNSI (177 aa)). Substrate-binding positions include 69–76 (RGGQVTYH), 137–139 (SLG), and 150–152 (GIA). Cys168 (acyl-thioester intermediate) is an active-site residue.

The protein belongs to the LipB family.

The protein localises to the cytoplasm. The catalysed reaction is octanoyl-[ACP] + L-lysyl-[protein] = N(6)-octanoyl-L-lysyl-[protein] + holo-[ACP] + H(+). The protein operates within protein modification; protein lipoylation via endogenous pathway; protein N(6)-(lipoyl)lysine from octanoyl-[acyl-carrier-protein]: step 1/2. In terms of biological role, catalyzes the transfer of endogenously produced octanoic acid from octanoyl-acyl-carrier-protein onto the lipoyl domains of lipoate-dependent enzymes. Lipoyl-ACP can also act as a substrate although octanoyl-ACP is likely to be the physiological substrate. This Francisella tularensis subsp. novicida (strain U112) protein is Octanoyltransferase.